Consider the following 560-residue polypeptide: Secreted RxLR effector protein 142 (560 aa).

Residues 1-22 (MRRAYFVAIALLVAAGGKTAAG) form the signal peptide. Disordered stretches follow at residues 48–73 (QSQN…ERTP) and 354–377 (INRP…LNNQ). A compositionally biased stretch (basic and acidic residues) spans 54 to 72 (ESRDPKDDLKLSAGNEERT). A RxLR-dEER motif is present at residues 56-71 (RDPKDDLKLSAGNEER). A compositionally biased stretch (polar residues) spans 361–377 (GPSTNGATTSNGGLNNQ).

The protein belongs to the RxLR effector family.

It is found in the secreted. Its subcellular location is the host nucleus. In terms of biological role, secreted effector that completely suppresses the host cell death induced by cell death-inducing proteins. In Plasmopara viticola (Downy mildew of grapevine), this protein is Secreted RxLR effector protein 142.